A 471-amino-acid chain; its full sequence is Desmin (471 aa).

A head region spans residues S2–E109. Residue S7 is modified to Phosphoserine; by CDK1. Position 12 is a phosphoserine; by AURKB (S12). R16 is modified (omega-N-methylarginine). Residue T17 is modified to Phosphothreonine; by AURKB and ROCK1. A Phosphoserine; by CDK1 modification is found at S28. Residue S31 is modified to Phosphoserine. Phosphoserine; by CDK1 is present on S32. The residue at position 37 (R37) is an Asymmetric dimethylarginine; alternate. The residue at position 37 (R37) is an Omega-N-methylarginine; alternate. The residue at position 45 (S45) is a Phosphoserine. Residue R58 is modified to ADP-ribosylarginine. Residue S60 is modified to Phosphoserine; by AURKB. R70 bears the Omega-N-methylarginine mark. Phosphothreonine; by ROCK1 is present on T77. Position 81 is a phosphoserine (S81). The IF rod domain maps to E109 to I417. The coil 1A stretch occupies residues K110 to N142. The linker 1 stretch occupies residues R143–V152. Positions A153–A253 are coil 1B. Positions Q254–P269 are linker 12. The segment at P269–R416 is interaction with NEB. The segment at D270–K288 is coil 2A. The linker 2 stretch occupies residues N289–W296. 4 positions are modified to phosphoserine: S291, S359, S362, and S425. The segment at Y297–E413 is coil 2B. The segment at E414–L471 is tail. An interaction with CRYAB region spans residues S439 to T454.

It belongs to the intermediate filament family. Homomer. Interacts with DST. Interacts with MTM1. Interacts with EPPK1; interaction is dependent of higher-order structure of intermediate filament. Interacts with CRYAB. Interacts with NEB (via nebulin repeats 160-164). Interacts (via rod region) with NEBL (via nebulin repeats 1-5). Interacts with ASB2; the interaction targets DES for proteasomal degradation. Interacts with PKP1. Interacts with FLII. Post-translationally, ADP-ribosylation prevents ability to form intermediate filaments. In terms of processing, phosphorylation at Ser-7, Ser-28 and Ser-32 by CDK1 and phosphorylation at Ser-60 by AURKB contribute to efficient separation of desmin intermediate filaments during mitosis. Ubiquitination by a SCF-like complex containing ASB2 leads to proteasomal degradation.

It is found in the cytoplasm. Its subcellular location is the myofibril. The protein localises to the sarcomere. It localises to the z line. The protein resides in the cell membrane. It is found in the sarcolemma. Its subcellular location is the nucleus. The protein localises to the cell tip. It localises to the nucleus envelope. Its function is as follows. Muscle-specific type III intermediate filament essential for proper muscular structure and function. Plays a crucial role in maintaining the structure of sarcomeres, inter-connecting the Z-disks and forming the myofibrils, linking them not only to the sarcolemmal cytoskeleton, but also to the nucleus and mitochondria, thus providing strength for the muscle fiber during activity. In adult striated muscle they form a fibrous network connecting myofibrils to each other and to the plasma membrane from the periphery of the Z-line structures. May act as a sarcomeric microtubule-anchoring protein: specifically associates with detyrosinated tubulin-alpha chains, leading to buckled microtubules and mechanical resistance to contraction. Required for nuclear membrane integrity, via anchoring at the cell tip and nuclear envelope, resulting in maintenance of microtubule-derived intracellular mechanical forces. Contributes to the transcriptional regulation of the NKX2-5 gene in cardiac progenitor cells during a short period of cardiomyogenesis and in cardiac side population stem cells in the adult. Plays a role in maintaining an optimal conformation of nebulette (NEB) on heart muscle sarcomeres to bind and recruit cardiac alpha-actin. In Sus scrofa (Pig), this protein is Desmin (DES).